Consider the following 390-residue polypeptide: Transforming growth factor beta-1 proprotein (390 aa).

Positions 1–29 (MPPSGLRLLPLLLPLLWLLVLTPGRPAAG) are cleaved as a signal peptide. The tract at residues 30-74 (LSTCKTIDMELVKRKRIEAIRGQILSKLRLASPPSQGDVPPGPLP) is straightjacket domain. Residues 75–271 (EAVLALYNST…ATPLERAQHL (197 aa)) form an arm domain region. N-linked (GlcNAc...) asparagine glycans are attached at residues asparagine 82, asparagine 136, and asparagine 176. Positions 226 to 252 (DSKDNTLHVEINGFNSGRRGDLATIHG) are bowtie tail. A Cell attachment site motif is present at residues 244-246 (RGD). Intrachain disulfides connect cysteine 285/cysteine 294, cysteine 293/cysteine 356, cysteine 322/cysteine 387, and cysteine 326/cysteine 389.

Belongs to the TGF-beta family. As to quaternary structure, homodimer; disulfide-linked. Interacts with the serine proteases, HTRA1 and HTRA3: the interaction with either inhibits TGFB1-mediated signaling and the HTRA protease activity is required for this inhibition. May interact with THSD4; this interaction may lead to sequestration by FBN1 microfibril assembly and attenuation of TGFB signaling. Interacts with CD109, DPT and ASPN. Interacts with EFEMP2. Interacts with TSKU; the interaction contributes to regulation of the hair cycle. Interacts with TGFBR3. In terms of assembly, homodimer; disulfide-linked. Interacts with transforming growth factor beta-1 (TGF-beta-1) chain; interaction is non-covalent and maintains TGF-beta-1 in a latent state; each latency-associated peptide (LAP) monomer interacts with TGF-beta-1 in the other monomer. Interacts with LTBP1; leading to regulation of TGF-beta-1 activation. Interacts with LRRC32/GARP; leading to regulation of TGF-beta-1 activation on the surface of activated regulatory T-cells (Tregs). Interacts with LRRC33/NRROS; leading to regulation of TGF-beta-1 activation in macrophages and microglia. Interacts (via cell attachment site) with integrins ITGAV and ITGB6 (ITGAV:ITGB6), leading to release of the active TGF-beta-1. Interacts with NREP; the interaction results in a decrease in TGFB1 autoinduction. Interacts with HSP90AB1; inhibits latent TGFB1 activation. Homodimer; disulfide-linked. Interacts with TGF-beta receptors (TGFBR1 and TGFBR2), leading to signal transduction. Transforming growth factor beta-1 proprotein: The precursor proprotein is cleaved in the Golgi apparatus by FURIN to form Transforming growth factor beta-1 (TGF-beta-1) and Latency-associated peptide (LAP) chains, which remain non-covalently linked, rendering TGF-beta-1 inactive. Post-translationally, N-glycosylated. Deglycosylation leads to activation of Transforming growth factor beta-1 (TGF-beta-1); mechanisms triggering deglycosylation-driven activation of TGF-beta-1 are however unclear.

The protein resides in the secreted. It localises to the extracellular space. Its subcellular location is the extracellular matrix. Transforming growth factor beta-1 proprotein: Precursor of the Latency-associated peptide (LAP) and Transforming growth factor beta-1 (TGF-beta-1) chains, which constitute the regulatory and active subunit of TGF-beta-1, respectively. In terms of biological role, required to maintain the Transforming growth factor beta-1 (TGF-beta-1) chain in a latent state during storage in extracellular matrix. Associates non-covalently with TGF-beta-1 and regulates its activation via interaction with 'milieu molecules', such as LTBP1, LRRC32/GARP and LRRC33/NRROS, that control activation of TGF-beta-1. Interaction with LRRC33/NRROS regulates activation of TGF-beta-1 in macrophages and microglia. Interaction with LRRC32/GARP controls activation of TGF-beta-1 on the surface of activated regulatory T-cells (Tregs). Interaction with integrins (ITGAV:ITGB6 or ITGAV:ITGB8) results in distortion of the Latency-associated peptide chain and subsequent release of the active TGF-beta-1. Its function is as follows. Multifunctional protein that regulates the growth and differentiation of various cell types and is involved in various processes, such as normal development, immune function, microglia function and responses to neurodegeneration. Activation into mature form follows different steps: following cleavage of the proprotein in the Golgi apparatus, Latency-associated peptide (LAP) and Transforming growth factor beta-1 (TGF-beta-1) chains remain non-covalently linked rendering TGF-beta-1 inactive during storage in extracellular matrix. At the same time, LAP chain interacts with 'milieu molecules', such as LTBP1, LRRC32/GARP and LRRC33/NRROS that control activation of TGF-beta-1 and maintain it in a latent state during storage in extracellular milieus. TGF-beta-1 is released from LAP by integrins (ITGAV:ITGB6 or ITGAV:ITGB8): integrin-binding to LAP stabilizes an alternative conformation of the LAP bowtie tail and results in distortion of the LAP chain and subsequent release of the active TGF-beta-1. Once activated following release of LAP, TGF-beta-1 acts by binding to TGF-beta receptors (TGFBR1 and TGFBR2), which transduce signal. While expressed by many cells types, TGF-beta-1 only has a very localized range of action within cell environment thanks to fine regulation of its activation by Latency-associated peptide chain (LAP) and 'milieu molecules'. Plays an important role in bone remodeling: acts as a potent stimulator of osteoblastic bone formation, causing chemotaxis, proliferation and differentiation in committed osteoblasts. Can promote either T-helper 17 cells (Th17) or regulatory T-cells (Treg) lineage differentiation in a concentration-dependent manner. At high concentrations, leads to FOXP3-mediated suppression of RORC and down-regulation of IL-17 expression, favoring Treg cell development. At low concentrations in concert with IL-6 and IL-21, leads to expression of the IL-17 and IL-23 receptors, favoring differentiation to Th17 cells. Stimulates sustained production of collagen through the activation of CREB3L1 by regulated intramembrane proteolysis (RIP). Mediates SMAD2/3 activation by inducing its phosphorylation and subsequent translocation to the nucleus. Positively regulates odontoblastic differentiation in dental papilla cells, via promotion of IPO7-mediated translocation of phosphorylated SMAD2 to the nucleus and subsequent transcription of target genes. Can induce epithelial-to-mesenchymal transition (EMT) and cell migration in various cell types. The sequence is that of Transforming growth factor beta-1 proprotein (TGFB1) from Sus scrofa (Pig).